Consider the following 353-residue polypeptide: Ornithine racemase (353 aa).

The active-site Proton acceptor is the Lys-35. Position 35 is an N6-(pyridoxal phosphate)lysine (Lys-35). Position 128 (Arg-128) interacts with substrate.

The protein belongs to the alanine racemase family. In terms of assembly, homodimer. Requires pyridoxal 5'-phosphate as cofactor.

The catalysed reaction is L-ornithine = D-ornithine. In terms of biological role, involved in the ornithine fermentation pathway. Catalyzes the conversion of L-ornithine to D-ornithine. OR could also racemize basic amino acids such as lysine and arginine. Serine, asparagine and alanine could be also converted by OR, but at a lower rate. This Acetoanaerobium sticklandii (strain ATCC 12662 / DSM 519 / JCM 1433 / CCUG 9281 / NCIMB 10654 / HF) (Clostridium sticklandii) protein is Ornithine racemase.